We begin with the raw amino-acid sequence, 160 residues long: Probable prefoldin subunit 5 (160 aa).

The protein belongs to the prefoldin subunit alpha family. As to quaternary structure, heterohexamer of two PFD-alpha type and four PFD-beta type subunits.

Functionally, binds specifically to cytosolic chaperonin (c-CPN) and transfers target proteins to it. Binds to nascent polypeptide chain and promotes folding in an environment in which there are many competing pathways for nonnative proteins. This chain is Probable prefoldin subunit 5 (pfdn5), found in Dictyostelium discoideum (Social amoeba).